The chain runs to 646 residues: Phosphomethylpyrimidine synthase (646 aa).

Residues Asn235, Met264, Tyr293, His329, Ser349–Gly351, Asp390–Arg393, and Glu429 each bind substrate. His433 contributes to the Zn(2+) binding site. Residue Tyr456 coordinates substrate. Zn(2+) is bound at residue His497. 3 residues coordinate [4Fe-4S] cluster: Cys577, Cys580, and Cys585.

Belongs to the ThiC family. Homodimer. Requires [4Fe-4S] cluster as cofactor.

It carries out the reaction 5-amino-1-(5-phospho-beta-D-ribosyl)imidazole + S-adenosyl-L-methionine = 4-amino-2-methyl-5-(phosphooxymethyl)pyrimidine + CO + 5'-deoxyadenosine + formate + L-methionine + 3 H(+). The protein operates within cofactor biosynthesis; thiamine diphosphate biosynthesis. In terms of biological role, catalyzes the synthesis of the hydroxymethylpyrimidine phosphate (HMP-P) moiety of thiamine from aminoimidazole ribotide (AIR) in a radical S-adenosyl-L-methionine (SAM)-dependent reaction. The sequence is that of Phosphomethylpyrimidine synthase from Vibrio campbellii (strain ATCC BAA-1116).